Here is a 303-residue protein sequence, read N- to C-terminus: UDP-3-O-acyl-N-acetylglucosamine deacetylase (303 aa).

Residues His78, His237, and Asp241 each contribute to the Zn(2+) site. The active-site Proton donor is His264.

Belongs to the LpxC family. It depends on Zn(2+) as a cofactor.

It carries out the reaction a UDP-3-O-[(3R)-3-hydroxyacyl]-N-acetyl-alpha-D-glucosamine + H2O = a UDP-3-O-[(3R)-3-hydroxyacyl]-alpha-D-glucosamine + acetate. The protein operates within glycolipid biosynthesis; lipid IV(A) biosynthesis; lipid IV(A) from (3R)-3-hydroxytetradecanoyl-[acyl-carrier-protein] and UDP-N-acetyl-alpha-D-glucosamine: step 2/6. In terms of biological role, catalyzes the hydrolysis of UDP-3-O-myristoyl-N-acetylglucosamine to form UDP-3-O-myristoylglucosamine and acetate, the committed step in lipid A biosynthesis. The protein is UDP-3-O-acyl-N-acetylglucosamine deacetylase of Coxiella burnetii (strain CbuK_Q154) (Coxiella burnetii (strain Q154)).